Consider the following 691-residue polypeptide: Cyclic nucleotide-gated channel alpha-1 (691 aa).

The Cytoplasmic segment spans residues 1-168 (MKKNIINTWY…PAGNMYYNWL (168 aa)). A disordered region spans residues 31-151 (ENGARSSFSD…KGKDKKEEEK (121 aa)). Residues 39–56 (SDDDGDDDSASMFEESEN) show a composition bias toward acidic residues. Basic and acidic residues-rich tracts occupy residues 57–76 (ETPH…DPSQ) and 112–151 (SKSG…EEEK). A helical transmembrane segment spans residues 169–190 (FCITLPVMYNWTMVIARACFDE). Topologically, residues 191–200 (LQSDYLEYWI) are extracellular. Residues 201–221 (IFDYLSDIVYLLDMFVRTRTG) traverse the membrane as a helical segment. The Cytoplasmic segment spans residues 222-246 (YLEQGLLVREEAKLIEKYKSNLQFK). Residues 247-265 (LDFLSVIPTDLLYFKLGWN) form a helical membrane-spanning segment. Topologically, residues 266–270 (YPEIR) are extracellular. Residues 271-289 (LNRLLRISRMFEFFQRTET) traverse the membrane as a helical segment. The Cytoplasmic segment spans residues 290 to 296 (RTNYPNI). The segment at 294–402 (PNIFRISNLV…GNIGSMISNM (109 aa)) is ion conduction pathway. Residues 297–320 (FRISNLVMYIVIIIHWNACVYFSI) traverse the membrane as a helical segment. The Extracellular portion of the chain corresponds to 321-343 (SKAIGFGNDTWVYPDVNDPEFGR). Asn328 carries N-linked (GlcNAc...) asparagine glycosylation. Transmembrane regions (helical) follow at residues 344–378 (LARK…VFVV) and 379–403 (VDFL…SNMN). The interval 361-364 (TIGE) is selectivity filter. The segment at 404 to 480 (AARAEFQARI…DTLKKVRIFA (77 aa)) is C-linker. At 404 to 691 (AARAEFQARI…ESRPLDSTQD (288 aa)) the chain is on the cytoplasmic side. The tract at residues 484–604 (AGLLVELVLK…EEKGKQILMK (121 aa)) is cyclic nucleotide-binding domain. Gly544, Ser547, Arg560, and Thr561 together coordinate 3',5'-cyclic GMP. Residues Arg560 and Thr561 each contribute to the 3',5'-cyclic AMP site. The stretch at 622–676 (LEEKVTRMEGSVDLLQTRFARILAEYESMQQKLKQRLTKVERFLKPIIDTEFSAL) forms a coiled coil.

This sequence belongs to the cyclic nucleotide-gated cation channel (TC 1.A.1.5) family. CNGA1 subfamily. In terms of assembly, forms heterotetrameric channels composed of CNGA1 and CNGB1 subunits with 3:1 stoichiometry. May also form cyclic nucleotide-activated homotetrameric channels, that are efficiently activated by saturating cGMP, but poorly activated by saturating cAMP compared to the heterotetramer with CNGB1. The channel binds Ca(2+)-bound CALM1 via CaM1 and CaM2 regions of the CNGB1 subunit; this interaction modulates the affinity of the channel for cNMPs in response to intracellular Ca(2+) levels.

It is found in the cell membrane. It catalyses the reaction Ca(2+)(in) = Ca(2+)(out). The enzyme catalyses Na(+)(in) = Na(+)(out). It carries out the reaction K(+)(in) = K(+)(out). The catalysed reaction is NH4(+)(in) = NH4(+)(out). It catalyses the reaction Rb(+)(in) = Rb(+)(out). The enzyme catalyses Li(+)(in) = Li(+)(out). It carries out the reaction Cs(+)(in) = Cs(+)(out). Pore-forming subunit of the rod cyclic nucleotide-gated channel. Mediates rod photoresponses at dim light converting transient changes in intracellular cGMP levels into electrical signals. In the dark, cGMP levels are high and keep the channel open enabling a steady inward current carried by Na(+) and Ca(2+) ions that leads to membrane depolarization and neurotransmitter release from synaptic terminals. Upon photon absorption cGMP levels decline leading to channel closure and membrane hyperpolarization that ultimately slows neurotransmitter release and signals the presence of light, the end point of the phototransduction cascade. Conducts cGMP- and cAMP-gated ion currents, with permeability for monovalent and divalent cations. The selectivity for Ca(2+) over Na(+) increases with cGMP concentrations, whereas the selectivity among monovalent ions is independent of the cGMP levels. The chain is Cyclic nucleotide-gated channel alpha-1 from Canis lupus familiaris (Dog).